The chain runs to 626 residues: Probable potassium transport system protein Kup (626 aa).

12 helical membrane passes run 11–31, 55–75, 103–123, 140–160, 171–191, 216–236, 250–270, 282–302, 340–360, 369–389, 395–415, and 422–442; these read FLTL…TSPL, LSLI…VFVM, AWII…GMIT, AALS…LFLI, LFGP…FVSL, LGFA…ALYA, WFAV…ALLI, LLVP…ATVI, IYAP…VLAF, AYGL…LVVA, WPGL…LSFL, and LGDG…VMST.

The protein belongs to the HAK/KUP transporter (TC 2.A.72) family.

The protein localises to the cell inner membrane. The catalysed reaction is K(+)(in) + H(+)(in) = K(+)(out) + H(+)(out). In terms of biological role, transport of potassium into the cell. Likely operates as a K(+):H(+) symporter. The polypeptide is Probable potassium transport system protein Kup (Methylococcus capsulatus (strain ATCC 33009 / NCIMB 11132 / Bath)).